The following is a 689-amino-acid chain: Glycine--tRNA ligase beta subunit (689 aa).

Belongs to the class-II aminoacyl-tRNA synthetase family. Tetramer of two alpha and two beta subunits.

It is found in the cytoplasm. The enzyme catalyses tRNA(Gly) + glycine + ATP = glycyl-tRNA(Gly) + AMP + diphosphate. The protein is Glycine--tRNA ligase beta subunit of Shigella boydii serotype 4 (strain Sb227).